The sequence spans 551 residues: Hyaluronan synthase 2 (551 aa).

At 1 to 11 (MHCERFICILR) the chain is on the cytoplasmic side. Residues 12 to 32 (IIGTTLFGVSLLLGISAAYIV) form a helical membrane-spanning segment. Over 33-45 (GYQFIQTDNYYFS) the chain is Extracellular. Residues 46–66 (FGLYGAILALHLIIQSLFAFL) traverse the membrane as a helical segment. Residues 67 to 374 (EHRKMKRSLE…NSLWFHKHHL (308 aa)) lie on the Cytoplasmic side of the membrane. The helical transmembrane segment at 375-395 (WMTYEAVITGFFPFFLIATVI) threads the bilayer. The Extracellular portion of the chain corresponds to 396 to 402 (QLFYRGR). Residues 403-423 (IWNILLFLLTVQLVGLIKSSF) traverse the membrane as a helical segment. The Cytoplasmic portion of the chain corresponds to 424-429 (ASALRG). Residues 430–450 (NIVMVFMSFYSVLYMSSLLPA) traverse the membrane as a helical segment. The Extracellular portion of the chain corresponds to 451-470 (KMFAIATINKAGWGTSGRKT). A helical membrane pass occupies residues 471-491 (IVVNFIGLIPITVWFTILLGG). Over 492–509 (VCYTIWRETKKPFSESEK) the chain is Cytoplasmic. The chain crosses the membrane as a helical span at residues 510 to 530 (IVLAVGAILYACYWVMLLTMY). Residues 531–551 (VSLVMKCGRRRKEPQHDLVLA) lie on the Extracellular side of the membrane.

The protein belongs to the NodC/HAS family. As to quaternary structure, homodimer; dimerization promotes enzymatic activity. It depends on Mg(2+) as a cofactor.

Its subcellular location is the cell membrane. The protein localises to the endoplasmic reticulum membrane. It is found in the vesicle. The protein resides in the golgi apparatus membrane. It localises to the lysosome. It carries out the reaction [hyaluronan](n) + UDP-N-acetyl-alpha-D-glucosamine = N-acetyl-beta-D-glucosaminyl-(1-&gt;4)-[hyaluronan](n) + UDP + H(+). The enzyme catalyses N-acetyl-beta-D-glucosaminyl-(1-&gt;4)-[hyaluronan](n) + UDP-alpha-D-glucuronate = [hyaluronan](n+1) + UDP + H(+). It participates in glycan biosynthesis; hyaluronan biosynthesis. Its function is as follows. Catalyzes the addition of GlcNAc or GlcUA monosaccharides to the nascent hyaluronan polymer. Therefore, it is essential to hyaluronan synthesis a major component of most extracellular matrices that has a structural role in tissues architectures and regulates cell adhesion, migration and differentiation. This is one of three isoenzymes responsible for cellular hyaluronan synthesis and it is particularly responsible for the synthesis of high molecular mass hyaluronan. This Xenopus laevis (African clawed frog) protein is Hyaluronan synthase 2 (has2).